A 475-amino-acid polypeptide reads, in one-letter code: Peroxisome proliferator-activated receptor gamma (475 aa).

Ser-82 carries the phosphoserine; by MAPK modification. The nuclear receptor DNA-binding region spans 106–180 (AIECRVCSDK…VGMSHNAIRF (75 aa)). 2 NR C4-type zinc fingers span residues 109-129 (CRVC…CEGC) and 146-168 (CDLN…FQKC). An interaction with FAM120B region spans residues 175 to 250 (HNAIRFGRMP…DKSPFVIYDM (76 aa)). Residues 208 to 473 (DLRALAKHLY…HPLLQEIYKD (266 aa)) enclose the NR LBD domain. Residue Lys-222 forms a Glycyl lysine isopeptide (Lys-Gly) (interchain with G-Cter in ubiquitin) linkage. A 9aaTAD motif is present at residues 465 to 473 (PLLQEIYKD).

Belongs to the nuclear hormone receptor family. NR1 subfamily. Interacts with FOXO1 (acetylated form). Heterodimer with other nuclear receptors, such as RXRA. The heterodimer with the retinoic acid receptor RXRA is called adipocyte-specific transcription factor ARF6. Interacts with NCOA6 coactivator, leading to a strong increase in transcription of target genes. Interacts with coactivator PPARBP, leading to a mild increase in transcription of target genes. Interacts with NOCA7 in a ligand-inducible manner. Interacts with NCOA1 and NCOA2 LXXLL motifs. Interacts with ASXL1, ASXL2, DNTTIP2, FAM120B, MAP2K1/MEK1, NR0B2, PDPK1, PRDM16, PRMT2 and TGFB1I1. Interacts (when activated by agonist) with PPP5C. Interacts with HELZ2 and THRAP3; the interaction stimulates the transcriptional activity of PPARG. Interacts with PER2, the interaction is ligand dependent and blocks PPARG recruitment to target promoters. Interacts with NOCT. Interacts with ACTN4. Interacts (when in the liganded conformation) with GPS2. Interacts with CRY1 and CRY2 in a ligand-dependent manner. In the absence of hormonal ligand, interacts with TACC1. In macrophages, interacts with PAQR3 and STUB1; the interactions promote PPARG poylubiquitination and STUB1-mediated degradation. In terms of processing, phosphorylated at basal conditions and dephosphorylated when treated with the ligand. May be dephosphorylated by PPP5C. The phosphorylated form may be inactive and dephosphorylation induces adipogenic activity. Post-translationally, ubiquitinated by E3 ubiquitin-protein ligase complex containing FBXO9; leading to proteasomal degradation. Ubiquitinated at Lys-222 by TRIM55 leading to proteasomal degradation. Ubiquitinated by E3 ubiquitin-protein ligase STUB1/CHIP; leading to proteasomal degradation.

It is found in the nucleus. The protein resides in the cytoplasm. PDPK1 activates its transcriptional activity independently of its kinase activity. Nuclear receptor that binds peroxisome proliferators such as hypolipidemic drugs and fatty acids. Once activated by a ligand, the nuclear receptor binds to DNA specific PPAR response elements (PPRE) and modulates the transcription of its target genes, such as acyl-CoA oxidase. It therefore controls the peroxisomal beta-oxidation pathway of fatty acids. Key regulator of adipocyte differentiation and glucose homeostasis. ARF6 acts as a key regulator of the tissue-specific adipocyte P2 (aP2) enhancer. Acts as a critical regulator of gut homeostasis by suppressing NF-kappa-B-mediated pro-inflammatory responses. Plays a role in the regulation of cardiovascular circadian rhythms by regulating the transcription of BMAL1 in the blood vessels. The polypeptide is Peroxisome proliferator-activated receptor gamma (PPARG) (Oryctolagus cuniculus (Rabbit)).